Reading from the N-terminus, the 216-residue chain is Probable nicotinate-nucleotide adenylyltransferase (216 aa).

It belongs to the NadD family.

It catalyses the reaction nicotinate beta-D-ribonucleotide + ATP + H(+) = deamido-NAD(+) + diphosphate. Its pathway is cofactor biosynthesis; NAD(+) biosynthesis; deamido-NAD(+) from nicotinate D-ribonucleotide: step 1/1. Functionally, catalyzes the reversible adenylation of nicotinate mononucleotide (NaMN) to nicotinic acid adenine dinucleotide (NaAD). In Geobacter metallireducens (strain ATCC 53774 / DSM 7210 / GS-15), this protein is Probable nicotinate-nucleotide adenylyltransferase.